The sequence spans 462 residues: Elongation factor 1-alpha 1 (462 aa).

At Gly2 the chain carries N,N,N-trimethylglycine. The 238-residue stretch at 5–242 folds into the tr-type G domain; the sequence is KTHINIVVIG…DCILPPTRPT (238 aa). A G1 region spans residues 14–21; the sequence is GHVDSGKS. Residue 14–21 participates in GTP binding; it reads GHVDSGKS. Residue Lys36 is modified to N6,N6,N6-trimethyllysine; alternate. Lys36 carries the post-translational modification N6,N6-dimethyllysine; alternate. Position 36 is an N6-methyllysine; alternate (Lys36). Lys55 bears the N6,N6-dimethyllysine mark. The interval 70–74 is G2; that stretch reads GITID. N6,N6,N6-trimethyllysine; by EEF1AKMT1 is present on Lys79. The interval 91-94 is G3; that stretch reads DAPG. 153–156 contributes to the GTP binding site; sequence NKMD. Residues 153-156 are G4; sequence NKMD. At Lys165 the chain carries N6,N6,N6-trimethyllysine; alternate; by EEF1AKMT3. Lys165 carries the post-translational modification N6,N6-dimethyllysine; alternate; by EEF1AKMT3. Position 165 is an N6-acetyllysine; alternate (Lys165). Lys165 bears the N6-methyllysine; alternate; by EEF1AKMT3 mark. An N6-acetyllysine modification is found at Lys172. 194-196 serves as a coordination point for GTP; the sequence is SGW. The interval 194–196 is G5; it reads SGW. Lys273 bears the N6-acetyllysine mark. At Ser300 the chain carries Phosphoserine; by TGFBR1. 5-glutamyl glycerylphosphorylethanolamine is present on Glu301. Position 318 is an N6,N6,N6-trimethyllysine; by EEF1AKMT2 (Lys318). A 5-glutamyl glycerylphosphorylethanolamine modification is found at Glu374. A Glycyl lysine isopeptide (Lys-Gly) (interchain with G-Cter in ubiquitin) cross-link involves residue Lys385. Position 392 is an N6-acetyllysine; alternate (Lys392). N6-succinyllysine; alternate is present on Lys392. The residue at position 432 (Thr432) is a Phosphothreonine; by PASK. Lys439 is subject to N6-acetyllysine.

This sequence belongs to the TRAFAC class translation factor GTPase superfamily. Classic translation factor GTPase family. EF-Tu/EF-1A subfamily. In terms of assembly, found in a nuclear export complex with XPO5, EEF1A1, Ran and aminoacylated tRNA. Interacts with PARP1 and TXK. Interacts with KARS1. May interact with ERGIC2. Interacts with IFIT1 (via TPR repeats 4-7). Interacts with DLC1, facilitating distribution to the membrane periphery and ruffles upon growth factor stimulation. Interacts with ZPR1; the interaction occurs in a epidermal growth factor (EGF)-dependent manner. Interacts with PPP1R16B. Interacts with SPHK1 and SPHK2; both interactions increase SPHK1 and SPHK2 kinase activity. Interacts with guanyl-nucleotide exchange factor EEF1B2. Interacts (via middle-region) with HTATIP2 (via N-terminus); the interaction is direct and competes with EEF1A1 binding to guanyl-nucleotide exchange factor EEF1B2, thereby inhibiting GDP for GTP exchange and reactivation of EEF1A1. Interacts with tRNA. Post-translationally, ISGylated. Phosphorylated by TXK. Phosphorylation by PASK increases translation efficiency. Phosphorylated by ROCK2. Phosphorylation by TGFBR1 inhibits translation elongation. In terms of processing, trimethylated at Lys-79 by EEF1AKMT1. Methylated at Lys-165 by EEF1AKMT3, methylation by EEF1AKMT3 is dynamic as well as inducible by stress conditions, such as ER-stress, and plays a regulatory role on mRNA translation. Trimethylated at Lys-318 by EEF1AKMT2. Mono-, di-, and trimethylated at Lys-36 by EEF1AKMT4; trimethylated form is predominant. Methylation by EEF1AKMT4 contributes to the fine-tuning of translation rates for a subset of tRNAs. Trimethylated at Gly-2 by METTL13. Mono- and dimethylated at Lys-55 by METTL13; dimethylated form is predominant. Post-translationally, ubiquitinated at Lys-385 by RNF14 in response to ribosome collisions (ribosome stalling), leading to its degradation by the proteasome and rescue of stalled ribosomes.

The protein localises to the cytoplasm. Its subcellular location is the nucleus. It is found in the nucleolus. It localises to the cell membrane. It carries out the reaction GTP + H2O = GDP + phosphate + H(+). Functionally, translation elongation factor that catalyzes the GTP-dependent binding of aminoacyl-tRNA (aa-tRNA) to the A-site of ribosomes during the elongation phase of protein synthesis. Base pairing between the mRNA codon and the aa-tRNA anticodon promotes GTP hydrolysis, releasing the aa-tRNA from EEF1A1 and allowing its accommodation into the ribosome. The growing protein chain is subsequently transferred from the P-site peptidyl tRNA to the A-site aa-tRNA, extending it by one amino acid through ribosome-catalyzed peptide bond formation. Also plays a role in the positive regulation of IFNG transcription in T-helper 1 cells as part of an IFNG promoter-binding complex with TXK and PARP1. Also plays a role in cytoskeleton organization by promoting actin bundling. The chain is Elongation factor 1-alpha 1 (EEF1A1) from Bos taurus (Bovine).